The chain runs to 199 residues: Imidazoleglycerol-phosphate dehydratase (199 aa).

Belongs to the imidazoleglycerol-phosphate dehydratase family.

Its subcellular location is the cytoplasm. The enzyme catalyses D-erythro-1-(imidazol-4-yl)glycerol 3-phosphate = 3-(imidazol-4-yl)-2-oxopropyl phosphate + H2O. It participates in amino-acid biosynthesis; L-histidine biosynthesis; L-histidine from 5-phospho-alpha-D-ribose 1-diphosphate: step 6/9. The chain is Imidazoleglycerol-phosphate dehydratase from Paramagnetospirillum magneticum (strain ATCC 700264 / AMB-1) (Magnetospirillum magneticum).